A 742-amino-acid chain; its full sequence is Ectonucleotide pyrophosphatase/phosphodiesterase 1 (742 aa).

The Cytoplasmic segment spans residues 1-113 (MELQNDLESL…TGFHSKVPFK (113 aa)). Residues 114-134 (IIFRTLFGSLVFAIFLILMIN) form a helical membrane-spanning segment. Over 135–742 (IAKPHHSTRV…SIDDLVDSDT (608 aa)) the chain is Extracellular. N-linked (GlcNAc...) asparagine glycans are attached at residues N161 and N204. Residues 168-545 (PLTIVISLDG…VFTIGSHGYD (378 aa)) form a phosphodiesterase region. Residue T219 is the Nucleophile of the active site. N264, N296, and N403 each carry an N-linked (GlcNAc...) asparagine glycan. Positions 640-659 (EETEQDNVDNDNDDNDDGNT) are enriched in acidic residues. 2 disordered regions span residues 640–670 (EETE…SSSL) and 686–711 (TLLG…TAST). Residues 691-711 (TSPSSRSSSSSSIQASATAST) are compositionally biased toward low complexity.

It belongs to the nucleotide pyrophosphatase/phosphodiesterase family. Post-translationally, autophosphorylated as part of the catalytic cycle of phosphodiesterase/pyrophosphatase activity. N-glycosylated.

The protein resides in the membrane. The catalysed reaction is Hydrolytically removes 5'-nucleotides successively from the 3'-hydroxy termini of 3'-hydroxy-terminated oligonucleotides.. The enzyme catalyses a ribonucleoside 5'-triphosphate + H2O = a ribonucleoside 5'-phosphate + diphosphate + H(+). It catalyses the reaction a 2'-deoxyribonucleoside 5'-triphosphate + H2O = a 2'-deoxyribonucleoside 5'-phosphate + diphosphate + H(+). Its function is as follows. Mediates extracellular nucleotide derived phosphate hydrolysis along with NPP2 and PHO5. The chain is Ectonucleotide pyrophosphatase/phosphodiesterase 1 (NPP1) from Saccharomyces cerevisiae (strain ATCC 204508 / S288c) (Baker's yeast).